Reading from the N-terminus, the 300-residue chain is Bifunctional protein FolD (300 aa).

NADP(+) contacts are provided by residues 168–170, serine 193, and isoleucine 234; that span reads GRS.

The protein belongs to the tetrahydrofolate dehydrogenase/cyclohydrolase family. In terms of assembly, homodimer.

It carries out the reaction (6R)-5,10-methylene-5,6,7,8-tetrahydrofolate + NADP(+) = (6R)-5,10-methenyltetrahydrofolate + NADPH. The enzyme catalyses (6R)-5,10-methenyltetrahydrofolate + H2O = (6R)-10-formyltetrahydrofolate + H(+). It functions in the pathway one-carbon metabolism; tetrahydrofolate interconversion. Its function is as follows. Catalyzes the oxidation of 5,10-methylenetetrahydrofolate to 5,10-methenyltetrahydrofolate and then the hydrolysis of 5,10-methenyltetrahydrofolate to 10-formyltetrahydrofolate. This Ehrlichia ruminantium (strain Welgevonden) protein is Bifunctional protein FolD.